The sequence spans 388 residues: Na(+)/H(+) antiporter NhaA (388 aa).

11 consecutive transmembrane segments (helical) span residues 14–34, 59–79, 95–115, 125–145, 154–174, 179–199, 219–239, 254–274, 287–307, 328–348, and 356–376; these read GGII…SGFT, MLLW…GLEV, AFPV…YLAF, GWAI…ALLG, IFLM…IALF, LSMV…VLNL, VLKS…FIPL, VLHP…NAGV, ILPL…ISLF, IMAV…IASL, and ALIN…AVIG.

It belongs to the NhaA Na(+)/H(+) (TC 2.A.33) antiporter family.

The protein resides in the cell inner membrane. The enzyme catalyses Na(+)(in) + 2 H(+)(out) = Na(+)(out) + 2 H(+)(in). Na(+)/H(+) antiporter that extrudes sodium in exchange for external protons. This Citrobacter koseri (strain ATCC BAA-895 / CDC 4225-83 / SGSC4696) protein is Na(+)/H(+) antiporter NhaA.